The sequence spans 176 residues: Inorganic pyrophosphatase (176 aa).

The substrate site is built by K30, R44, and Y56. D66, D71, and D103 together coordinate Mg(2+). A substrate-binding site is contributed by Y142.

Belongs to the PPase family. In terms of assembly, homohexamer. Requires Mg(2+) as cofactor.

It localises to the cytoplasm. It carries out the reaction diphosphate + H2O = 2 phosphate + H(+). Its function is as follows. Catalyzes the hydrolysis of inorganic pyrophosphate (PPi) forming two phosphate ions. In Salmonella typhi, this protein is Inorganic pyrophosphatase.